Reading from the N-terminus, the 664-residue chain is Translation factor guf1, mitochondrial (664 aa).

The transit peptide at 1–43 (MRGCLQLARWLSAAPKGTAASLTRAPFGLANATRFFTNSAARA) directs the protein to the mitochondrion. In terms of domain architecture, tr-type G spans 66–246 (ERYRNFCIVA…TVVDKIPAPI (181 aa)). GTP-binding positions include 75-82 (AHVDHGKS), 139-143 (DTPGH), and 193-196 (NKVD).

This sequence belongs to the TRAFAC class translation factor GTPase superfamily. Classic translation factor GTPase family. LepA subfamily.

The protein localises to the mitochondrion inner membrane. The enzyme catalyses GTP + H2O = GDP + phosphate + H(+). Functionally, promotes mitochondrial protein synthesis. May act as a fidelity factor of the translation reaction, by catalyzing a one-codon backward translocation of tRNAs on improperly translocated ribosomes. Binds to mitochondrial ribosomes in a GTP-dependent manner. This is Translation factor guf1, mitochondrial (guf1) from Aspergillus clavatus (strain ATCC 1007 / CBS 513.65 / DSM 816 / NCTC 3887 / NRRL 1 / QM 1276 / 107).